The chain runs to 430 residues: MKTTIAQVGRYVNEQVTIGAWIANKRSSGKIAFLQLRDGTGFIQGVVVKAEVPEDVFALAKSITQESSLYVTGTVREDERSPSGYELSVEQIELIHQATDYPITPKQHGTEFLMDHRHLWLRSKRQHAIMKIRSQIIRSTYDFFSERGFTKLDSPILTGSSPEGTSELFHTKYFDEDAYLSQSGQLYAEAGAMALGRVFTFGPTFRAEKSKTRRHLIEFWMIEPEMAFVEHEESLEIQEQYVAHLAKAVLDHCQLELKQLGRDVTKLEAIKAPFPRITYDEALDLLKEKGFDDISWGDDFGSPHETAIAEHFDKPVFITRYPRSLKPFYMQPAPDRDDVVLCADLIAPEGYGEIIGGSERIHDYDLLKQELEKHNLPLDAYGWYLDLRKYGSVPHSGFGLGLERTVAWLSGTEHVRETIPFPRLLNRLYP.

Belongs to the class-II aminoacyl-tRNA synthetase family. In terms of assembly, homodimer.

The protein localises to the cytoplasm. The enzyme catalyses tRNA(Asn) + L-asparagine + ATP = L-asparaginyl-tRNA(Asn) + AMP + diphosphate + H(+). The sequence is that of Asparagine--tRNA ligase from Shouchella clausii (strain KSM-K16) (Alkalihalobacillus clausii).